The primary structure comprises 606 residues: Alpha-1,2-mannosyltransferase MNN23 (606 aa).

The Cytoplasmic segment spans residues Met1–Lys14. The chain crosses the membrane as a helical span at residues Ala15–Ile35. Residues Thr36 to Asn606 lie on the Extracellular side of the membrane. The interval Asp59–Asn86 is disordered. A compositionally biased stretch (basic and acidic residues) spans Glu62–Gly78.

It belongs to the MNN1/MNT family.

It localises to the golgi apparatus membrane. Its pathway is protein modification; protein glycosylation. Functionally, alpha-1,2-mannosyltransferase required for cell wall integrity. Responsible for addition of the first alpha-1,2-linked mannose to form the branches on the mannan backbone of oligosaccharides. Addition of alpha-1,2-mannose is required for stabilization of the alpha-1,6-mannose backbone and hence regulates mannan fibril length; and is important for both immune recognition and virulence. This chain is Alpha-1,2-mannosyltransferase MNN23 (MNN23), found in Candida albicans (strain SC5314 / ATCC MYA-2876) (Yeast).